The chain runs to 754 residues: 5-methyltetrahydropteroyltriglutamate--homocysteine methyltransferase (754 aa).

5-methyltetrahydropteroyltri-L-glutamate is bound by residues 17-20 (RELK) and Lys-117. Residues 431 to 433 (IGS) and Glu-484 each bind L-homocysteine. L-methionine is bound by residues 431 to 433 (IGS) and Glu-484. 5-methyltetrahydropteroyltri-L-glutamate is bound by residues 515–516 (RC) and Trp-561. Asp-599 serves as a coordination point for L-homocysteine. Asp-599 contributes to the L-methionine binding site. Glu-605 serves as a coordination point for 5-methyltetrahydropteroyltri-L-glutamate. Zn(2+) contacts are provided by His-641, Cys-643, and Glu-665. Catalysis depends on His-694, which acts as the Proton donor. Cys-726 is a binding site for Zn(2+).

The protein belongs to the vitamin-B12 independent methionine synthase family. Zn(2+) is required as a cofactor.

It catalyses the reaction 5-methyltetrahydropteroyltri-L-glutamate + L-homocysteine = tetrahydropteroyltri-L-glutamate + L-methionine. Its pathway is amino-acid biosynthesis; L-methionine biosynthesis via de novo pathway; L-methionine from L-homocysteine (MetE route): step 1/1. Its function is as follows. Catalyzes the transfer of a methyl group from 5-methyltetrahydrofolate to homocysteine resulting in methionine formation. This chain is 5-methyltetrahydropteroyltriglutamate--homocysteine methyltransferase, found in Salmonella newport (strain SL254).